Reading from the N-terminus, the 544-residue chain is MSSPGPSQPPAEDPPWPARLLRAPLGLLRLDPSGGALLLCGLVALLGWSWLRRRRARGIPPGPTPWPLVGNFGHVLLPPFLRRRSWLSSRTRAAGIDPSVIGPQVLLAHLARVYGSIFSFFIGHYLVVVLSDFHSVREALVQQAEVFSDRPRVPLISIVTKEKGVVFAHYGPVWRQQRKFSHSTLRHFGLGKLSLEPKIIEEFKYVKAEMQKHGEDPFCPFSIISNAVSNIICSLCFGQRFDYTNSEFKKMLGFMSRGLEICLNSQVLLVNICPWLYYLPFGPFKELRQIEKDITSFLKKIIKDHQESLDRENPQDFIDMYLLHMEEERKNNSNSSFDEEYLFYIIGDLFIAGTDTTTNSLLWCLLYMSLNPDVQEKVHEEIERVIGANRAPSLTDKAQMPYTEATIMEVQRLTVVVPLAIPHMTSENTVLQGYTIPKGTLILPNLWSVHRDPAIWEKPEDFYPNRFLDDQGQLIKKETFIPFGIGKRVCMGEQLAKMELFLMFVSLMQSFAFALPEDSKKPLLTGRFGLTLAPHPFNITISRR.

A run of 4 helical transmembrane segments spans residues 30 to 50, 113 to 133, 261 to 281, and 342 to 362; these read LDPS…GWSW, VYGS…LSDF, ICLN…YLPF, and LFYI…NSLL. Heme is bound at residue Cys-490. The helical transmembrane segment at 495-515 threads the bilayer; sequence LAKMELFLMFVSLMQSFAFAL.

It belongs to the cytochrome P450 family. Heme is required as a cofactor. In terms of tissue distribution, widely expressed with stronger expression in thymus, heart and cerebellum.

It localises to the endoplasmic reticulum membrane. Its subcellular location is the microsome membrane. The protein resides in the mitochondrion inner membrane. It catalyses the reaction an omega-methyl-long-chain fatty acid + reduced [NADPH--hemoprotein reductase] + O2 = an omega-hydroxy-long-chain fatty acid + oxidized [NADPH--hemoprotein reductase] + H2O + H(+). The catalysed reaction is (5Z,8Z,11Z,14Z)-eicosatetraenoate + reduced [NADPH--hemoprotein reductase] + O2 = 19-hydroxy-(5Z,8Z,11Z,14Z)-eicosatetraenoate + oxidized [NADPH--hemoprotein reductase] + H2O + H(+). The enzyme catalyses (5Z,8Z,11Z,14Z)-eicosatetraenoate + reduced [NADPH--hemoprotein reductase] + O2 = 20-hydroxy-(5Z,8Z,11Z,14Z)-eicosatetraenoate + oxidized [NADPH--hemoprotein reductase] + H2O + H(+). It carries out the reaction N-[(5Z,8Z,11Z,14Z)-eicosatetraenoyl]-serotonin + reduced [NADPH--hemoprotein reductase] + O2 = 2-oxo-N-[(5Z,8Z,11Z,14Z)-eicosatetraenoyl]-serotonin + oxidized [NADPH--hemoprotein reductase] + H2O + H(+). Its pathway is lipid metabolism; arachidonate metabolism. Functionally, a cytochrome P450 monooxygenase involved in the metabolism of arachidonic acid and its conjugates. Mechanistically, uses molecular oxygen inserting one oxygen atom into a substrate, and reducing the second into a water molecule, with two electrons provided by NADPH via cytochrome P450 reductase (CPR; NADPH-ferrihemoprotein reductase). Acts as an omega and omega-1 hydroxylase for arachidonic acid and possibly for other long chain fatty acids. May modulate the arachidonic acid signaling pathway and play a role in other fatty acid signaling processes. May down-regulate the biological activities of N-arachidonoyl-serotonin, an endocannabinoid that has anti-nociceptive effects through inhibition of fatty acid amide hydrolase FAAH, TRPV1 receptor and T-type calcium channels. Catalyzes C-2 oxidation of the indole ring of N-arachidonoyl-serotonin forming a less active product 2-oxo-N-arachidonoyl-serotonin. The sequence is that of Cytochrome P450 2U1 from Homo sapiens (Human).